Reading from the N-terminus, the 589-residue chain is Kelch-like protein 25 (589 aa).

Residues 46–114 (TDVTLWAGDR…AYSSRIVINE (69 aa)) form the BTB domain. The BACK domain occupies 149 to 250 (CLGMMVLSDA…LPSDCLKNAV (102 aa)). Kelch repeat units lie at residues 296–340 (TLLI…AIGC), 341–388 (KVYV…ELEN), 389–444 (CLYV…SAKL), 446–492 (LFVF…VLGS), 493–538 (QIFI…ASGN), and 539–585 (KLYV…STWK).

In terms of assembly, component of the BCR(KLHL25) E3 ubiquitin ligase complex, at least composed of CUL3, KLHL25 and RBX1.

It participates in protein modification; protein ubiquitination. In terms of biological role, substrate-specific adapter of a BCR (BTB-CUL3-RBX1) E3 ubiquitin ligase complex involved in various processes, such as translation homeostasis and lipid synthesis. The BCR(KLHL25) ubiquitin ligase complex acts by mediating ubiquitination of hypophosphorylated EIF4EBP1 (4E-BP1): ubiquitination and subsequent degradation of hypophosphorylated EIF4EBP1 (4E-BP1) probably serves as a homeostatic mechanism to maintain translation and prevent eIF4E inhibition when eIF4E levels are low. The BCR(KLHL25) complex does not target EIF4EBP1 (4E-BP1) when it is hyperphosphorylated or associated with eIF4E. The BCR(KLHL25) complex also acts as a regulator of lipid synthesis by mediating ubiquitination and degradation of ACLY, thereby inhibiting lipid synthesis. BCR(KLHL25)-mediated degradation of ACLY promotes fatty acid oxidation and is required for differentiation of inducible regulatory T (iTreg) cells. This is Kelch-like protein 25 from Mus musculus (Mouse).